An 860-amino-acid polypeptide reads, in one-letter code: MQEQYRPEEIESKVQLHWDEKRTFEVTEDESKEKYYCLSMLPYPSGRLHMGHVRNYTIGDVIARYQRMLGKNVLQPIGWDAFGLPAEGAAVKNNTAPAPWTYDNIAYMKNQLKMLGFGYDWSRELATCTPEYYRWEQKFFTELYKKGLVYKKTSAVNWCPNDQTVLANEQVIDGCCWRCDTKVERKEIPQWFIKITAYADELLNDLDKLDHWPDTVKTMQRNWIGRSEGVEITFNVKDYDNTLTVYTTRPDTFMGCTYLAVAAGHPLAQKAAENNPELAAFIDECRNTKVAEAEMATMEKKGVDTGFKAVHPLTGEEIPVWAANFVLMEYGTGAVMAVPGHDQRDYEFASKYGLNIKPVILAADGSEPDLSQQALTEKGVLFNSGEFNGLDHEAAFNAIADKLTEMGVGERKVNYRLRDWGVSRQRYWGAPIPMVTLEDGTVMPTPDDQLPVILPEDVVMDGITSPIKADPEWAKTTVNGMPALRETDTFDTFMESSWYYARYTCPEYKEGMLDSKAANYWLPVDIYIGGIEHAIMHLLYFRFFHKLMRDAGMVNSDEPAKQLLCQGMVLADAFYYVGENGERNWVSPVDAIVERDEKGRIVKAKDAAGHELVYTGMSKMSKSKNNGIDPQVMVERYGADTVRLFMMFASPADMTLEWQESGVEGANRFLKRVWKLVYEHTAKGDVAALNVDALTEDQKALRRDVHKTIAKVTDDIGRRQTFNTAIAAIMELMNKLAKAPTDGEQDRALMQEALLAVVRMLNPFTPHICFTLWQELKGEGDIDNAPWPVADEKAMVEDSTLVVVQVNGKVRAKITVPVDATEEQVRERAGQEHLVAKYLDGVTVRKVIYVPGKLLNLVVG.

Residues 42 to 52 carry the 'HIGH' region motif; it reads PYPSGRLHMGH. The 'KMSKS' region signature appears at 619-623; the sequence is KMSKS. Lys-622 is an ATP binding site.

It belongs to the class-I aminoacyl-tRNA synthetase family.

The protein localises to the cytoplasm. It catalyses the reaction tRNA(Leu) + L-leucine + ATP = L-leucyl-tRNA(Leu) + AMP + diphosphate. This is Leucine--tRNA ligase from Escherichia coli O45:K1 (strain S88 / ExPEC).